We begin with the raw amino-acid sequence, 277 residues long: Heme oxygenase (277 aa).

Heme b is bound at residue H29.

This sequence belongs to the heme oxygenase family.

Its subcellular location is the microsome. The protein resides in the endoplasmic reticulum. It carries out the reaction heme b + 3 reduced [NADPH--hemoprotein reductase] + 3 O2 = biliverdin IXalpha + CO + Fe(2+) + 3 oxidized [NADPH--hemoprotein reductase] + 3 H2O + H(+). In terms of biological role, heme oxygenase cleaves the heme ring at the alpha methene bridge to form biliverdin. Biliverdin is subsequently converted to bilirubin by biliverdin reductase. Under physiological conditions, the activity of heme oxygenase is highest in the spleen, where senescent erythrocytes are sequestrated and destroyed. In Takifugu rubripes (Japanese pufferfish), this protein is Heme oxygenase (hmox).